The following is a 380-amino-acid chain: O-methyltransferase ucdC (380 aa).

S-adenosyl-L-methionine contacts are provided by residues 222–223 (GG), Asp247, and Arg283. His287 acts as the Proton acceptor in catalysis.

It belongs to the class I-like SAM-binding methyltransferase superfamily. Cation-independent O-methyltransferase family. COMT subfamily.

The protein operates within secondary metabolite biosynthesis. Its function is as follows. Nonribosomal peptide synthetase that mediates the biosynthesis of usterphenyllins and uscandidusins, p-terphenyl derivatives. Within the pathway, ucdC catalyzes O-methylation of the terphenyl triol intermediate produced by ucdB to yield terphenyllin carrying two methoxy moieties at C-9 and C-12. The pathway begin with the biosynthesis of 4-hydroxyphenylpyruvate (HPPA) from L-tyrosine, possibly by the aminotransferase ucdG. The nonribosomal peptide synthetase ucdA then condenses two HPPA units to produce atromentin. The key step in this pathway is the reduction and dehydration of atromentin to form a terphenyl triol intermediate, performed by the NAD-dependent dehydrogenase ucdB. Further O-methylation by the methyltransferase ucdC forms terphenyllin carrying two methoxy moieties at C-9 and C-12, and subsequent dihydroxylation at C-3 of ring A and C-15 of ring C by the flavin-dependent oxygenase ucdD leads to 3,15-dihydroxyterphenyllin. Prenylation by ucdE at position C-5 of ring A forms usterphenyllin B, and is followed by a second prenylation at position C-14 of ring C to form usterphenyllin A. The following furan ring formation that leads to uscandidusins A and B was proven to be an unexpected spontaneous non-enzymatic reaction. The protein is O-methyltransferase ucdC of Aspergillus ustus.